The primary structure comprises 180 residues: GTP cyclohydrolase 1 (180 aa).

Positions 71, 74, and 142 each coordinate Zn(2+).

Belongs to the GTP cyclohydrolase I family. Homomer.

It carries out the reaction GTP + H2O = 7,8-dihydroneopterin 3'-triphosphate + formate + H(+). It participates in cofactor biosynthesis; 7,8-dihydroneopterin triphosphate biosynthesis; 7,8-dihydroneopterin triphosphate from GTP: step 1/1. In Helicobacter pylori (strain Shi470), this protein is GTP cyclohydrolase 1.